A 278-amino-acid polypeptide reads, in one-letter code: Anamorsin homolog (278 aa).

The N-terminal SAM-like domain stretch occupies residues methionine 1–phenylalanine 147. A linker region spans residues phenylalanine 147–phenylalanine 191. The [2Fe-2S] cluster site is built by cysteine 204, cysteine 214, cysteine 217, and cysteine 219. The fe-S binding site A stretch occupies residues cysteine 204–cysteine 219. [4Fe-4S] cluster is bound by residues cysteine 239, cysteine 242, cysteine 250, and cysteine 253. 2 short sequence motifs (cx2C motif) span residues cysteine 239–cysteine 242 and cysteine 250–cysteine 253. Residues cysteine 239–cysteine 253 form a fe-S binding site B region.

Belongs to the anamorsin family. Monomer. Requires [2Fe-2S] cluster as cofactor. [4Fe-4S] cluster is required as a cofactor.

Its subcellular location is the cytoplasm. It is found in the mitochondrion intermembrane space. In terms of biological role, component of the cytosolic iron-sulfur (Fe-S) protein assembly (CIA) machinery. Required for the maturation of extramitochondrial Fe-S proteins. Part of an electron transfer chain functioning in an early step of cytosolic Fe-S biogenesis, facilitating the de novo assembly of a [4Fe-4S] cluster on the cytosolic Fe-S scaffold complex. Electrons are transferred from NADPH via a FAD- and FMN-containing diflavin oxidoreductase. Together with the diflavin oxidoreductase, also required for the assembly of the diferric tyrosyl radical cofactor of ribonucleotide reductase (RNR), probably by providing electrons for reduction during radical cofactor maturation in the catalytic small subunit. This chain is Anamorsin homolog, found in Trichoplax adhaerens (Trichoplax reptans).